A 130-amino-acid chain; its full sequence is Albumin-1 D (130 aa).

The first 26 residues, 1-26 (MASVKLASLIVLFATLGMFLTKNVGA), serve as a signal peptide directing secretion. Cystine bridges form between Cys29-Cys46, Cys33-Cys48, and Cys41-Cys58. Propeptides lie at residues 64–69 (VFLKAN) and 123–130 (LLKSVSTA).

The C-terminal glycine may be removed from PA1b. As to expression, major component of both the cotyledons and embryonic axes of mature seeds.

In terms of biological role, PA1b binds to basic 7S globulin (BG) and stimulates its phosphorylation activity. Involved in the signal transduction system to regulate the growth and differentiation as a hormone peptide. Toxic to various insects through binding to a high affinity binding site in the insect gut. The protein is Albumin-1 D of Pisum sativum (Garden pea).